Reading from the N-terminus, the 320-residue chain is Beta-sarcoglycan (320 aa).

Low complexity predominate over residues 1-10; it reads MAAAAAAAAA. The segment at 1 to 34 is disordered; the sequence is MAAAAAAAAATEQQGSNGPVKKSMREKAVERRNV. Residues 1-67 lie on the Cytoplasmic side of the membrane; the sequence is MAAAAAAAAA…GLRGRKGNLA (67 aa). Over residues 23–34 the composition is skewed to basic and acidic residues; that stretch reads SMREKAVERRNV. The chain crosses the membrane as a helical; Signal-anchor for type II membrane protein span at residues 68–88; that stretch reads ICVIVLLFILAVINLLITLVI. Residues 89–320 lie on the Extracellular side of the membrane; the sequence is WAVIRIGPNG…VSDNPCGNTH (232 aa). N-linked (GlcNAc...) asparagine glycosylation is found at Asn-160, Asn-213, and Asn-260. 2 cysteine pairs are disulfide-bonded: Cys-290–Cys-316 and Cys-292–Cys-309.

It belongs to the sarcoglycan beta/delta/gamma/zeta family. In terms of assembly, cross-link to form 2 major subcomplexes: one consisting of SGCB, SGCD and SGCG and the other consisting of SGCB and SGCD. The association between SGCB and SGCG is particularly strong while SGCA is loosely associated with the other sarcoglycans. Post-translationally, disulfide bonds are present. As to expression, most strongly expressed in skeletal and heart muscle. Also detected in proliferating myoblasts.

The protein localises to the cell membrane. Its subcellular location is the sarcolemma. It localises to the cytoplasm. It is found in the cytoskeleton. Functionally, component of the sarcoglycan complex, a subcomplex of the dystrophin-glycoprotein complex which forms a link between the F-actin cytoskeleton and the extracellular matrix. In Mus musculus (Mouse), this protein is Beta-sarcoglycan (Sgcb).